The chain runs to 59 residues: Large ribosomal subunit protein uL30 (59 aa).

The protein belongs to the universal ribosomal protein uL30 family. Part of the 50S ribosomal subunit.

The sequence is that of Large ribosomal subunit protein uL30 from Staphylococcus haemolyticus (strain JCSC1435).